Here is a 463-residue protein sequence, read N- to C-terminus: Thiamine-repressible acid phosphatase pho4 (463 aa).

The N-terminal stretch at 1–18 (MKLSGISLWLLAASIVHA) is a signal peptide. Histidine 69 acts as the Nucleophile in catalysis. 6 N-linked (GlcNAc...) asparagine glycosylation sites follow: asparagine 98, asparagine 104, asparagine 186, asparagine 221, asparagine 251, and asparagine 328. Aspartate 341 serves as the catalytic Proton donor. N-linked (GlcNAc...) asparagine glycans are attached at residues asparagine 433, asparagine 439, and asparagine 458.

The protein belongs to the histidine acid phosphatase family.

It is found in the secreted. Its subcellular location is the cell wall. The enzyme catalyses a phosphate monoester + H2O = an alcohol + phosphate. In terms of biological role, may dephosphorylate thiamine phosphates. This is Thiamine-repressible acid phosphatase pho4 (pho4) from Schizosaccharomyces pombe (strain 972 / ATCC 24843) (Fission yeast).